The sequence spans 503 residues: Glutamate/gamma-aminobutyrate antiporter (503 aa).

33-43 (LHLVFFLLLGG) contacts L-glutamate. The next 7 membrane-spanning stretches (helical) occupy residues 35–55 (LVFF…LCAA), 153–173 (FVVG…AYFI), 194–214 (VSTL…EASA), 232–252 (ILLV…VAAV), 366–386 (LTVV…FVLI), 407–427 (IIAG…FVPP), and 440–460 (MILL…YELH).

Belongs to the amino acid-polyamine-organocation (APC) superfamily. Glutamate:GABA antiporter (GGA) (TC 2.A.3.7) family.

The protein resides in the cell membrane. The enzyme catalyses 4-aminobutanoate(in) + L-glutamate(out) = 4-aminobutanoate(out) + L-glutamate(in). In terms of biological role, involved in glutaminase-dependent acid resistance. Exchanges extracellular glutamate (Glu) for intracellular gamma-aminobutyric acid (GABA) under acidic conditions. This is Glutamate/gamma-aminobutyrate antiporter from Lactococcus lactis subsp. cremoris (strain MG1363).